The following is a 295-amino-acid chain: Protoheme IX farnesyltransferase (295 aa).

Transmembrane regions (helical) follow at residues 30–50, 51–71, 93–115, 119–136, 148–168, 175–195, 219–239, 244–264, and 275–295; these read LVVL…HPLI, AVIS…INMW, ISRS…IMMI, YISG…IYVY, IVIG…SVTG, LVLF…LSLL, IHIL…GLFL, LYEI…FQVF, and MFTY…LSSF.

It belongs to the UbiA prenyltransferase family. Protoheme IX farnesyltransferase subfamily.

It is found in the cell inner membrane. It catalyses the reaction heme b + (2E,6E)-farnesyl diphosphate + H2O = Fe(II)-heme o + diphosphate. It participates in porphyrin-containing compound metabolism; heme O biosynthesis; heme O from protoheme: step 1/1. Its function is as follows. Converts heme B (protoheme IX) to heme O by substitution of the vinyl group on carbon 2 of heme B porphyrin ring with a hydroxyethyl farnesyl side group. The polypeptide is Protoheme IX farnesyltransferase (Ehrlichia ruminantium (strain Welgevonden)).